Here is a 122-residue protein sequence, read N- to C-terminus: Basic phospholipase A2 Ts-G6D49 (122 aa).

Cystine bridges form between C26-C115, C28-C44, C43-C95, C49-C122, C50-C88, C57-C81, and C75-C86. Ca(2+) is bound by residues Y27, G29, and G31. Residue H47 is part of the active site. A Ca(2+)-binding site is contributed by D48. D89 is an active-site residue.

The cofactor is Ca(2+). In terms of tissue distribution, expressed by the venom gland.

It is found in the secreted. The enzyme catalyses a 1,2-diacyl-sn-glycero-3-phosphocholine + H2O = a 1-acyl-sn-glycero-3-phosphocholine + a fatty acid + H(+). In terms of biological role, snake venom phospholipase A2 that induces fast and sustaining local edema a few hours after injection (5-10 ug) in the hind paw, and prolongs the coagulation time of human plasma. Exhibits moderate hydrolytic activities and prefers the zwitterionic micelles (dPPC with Triton X-100) to the anionic micelles (dPPC with deoxycholate). PLA2 catalyzes the calcium-dependent hydrolysis of the 2-acyl groups in 3-sn-phosphoglycerides. The protein is Basic phospholipase A2 Ts-G6D49 of Trimeresurus stejnegeri (Chinese green tree viper).